Consider the following 540-residue polypeptide: Mitochondrial antiviral-signaling protein (540 aa).

The residue at position 2 (Pro2) is an N-acetylproline. The Cytoplasmic portion of the chain corresponds to 2-513 (PFAEDKTYKY…REVPCHRPSP (512 aa)). Glycyl lysine isopeptide (Lys-Gly) (interchain with G-Cter in ubiquitin) cross-links involve residues Lys7 and Lys10. Residues 10–77 (KYICRNFSNF…WVEYFIAALR (68 aa)) enclose the CARD domain. Residues 10–77 (KYICRNFSNF…WVEYFIAALR (68 aa)) are required for interaction with NLRX1. A lipid anchor (S-palmitoyl cysteine) is attached at Cys79. The segment at 95–297 (YQPRTSDRPP…EAPANSLPSK (203 aa)) is disordered. Over residues 106 to 122 (PLEPPSLPAERPGPPTP) the composition is skewed to pro residues. The tract at residues 143 to 147 (PVQET) is interaction with TRAF2. 2 stretches are compositionally biased toward polar residues: residues 145–165 (QETQ…QTLS) and 179–216 (ESSS…SLTP). Residues Ser152, Ser157, Ser165, Ser180, and Ser188 each carry the phosphoserine modification. The tract at residues 153 to 158 (PGENSE) is interaction with TRAF6. Residue Thr215 is modified to Phosphothreonine. A phosphoserine mark is found at Ser222 and Ser233. Thr234 is modified (phosphothreonine). Arg236 carries the post-translational modification Asymmetric dimethylarginine. Residues 241-266 (PGPTGSVVSTGTSFSSSSPGLASAGA) show a composition bias toward low complexity. Phosphoserine occurs at positions 253 and 258. Glycyl lysine isopeptide (Lys-Gly) (interchain with G-Cter in ubiquitin) cross-links involve residues Lys311 and Lys325. 2 disordered regions span residues 314–358 (ANPA…RAGM) and 373–419 (SAST…SELS). 3 stretches are compositionally biased toward polar residues: residues 317–331 (ASVS…TSSK), 339–355 (NALT…NSTR), and 373–382 (SASTVPTDGS). Positions 388–403 (TPAAPTPAGATGGSSA) are enriched in low complexity. At Ser408 the chain carries Phosphoserine. The short motif at 439–442 (LAIS) is the pLxIS motif element. Ser442 bears the Phosphoserine; by TBK1 mark. The interval 455–460 (PEENEY) is interaction with TRAF6. Residues Lys461 and Lys500 each participate in a glycyl lysine isopeptide (Lys-Gly) (interchain with G-Cter in ubiquitin) cross-link. Lys461 is covalently cross-linked ((Microbial infection) Glycyl lysine isopeptide (Lys-Gly) (interchain with G-Cter in UFM1)). The tract at residues 476–507 (IQLLEGNPGPPADPDGGPRPQADRKFQEREVP) is disordered. Positions 496 to 507 (QADRKFQEREVP) are enriched in basic and acidic residues. Residues 514-534 (GALWLQVAVTGVLVVTLLVVL) form a helical membrane-spanning segment. At 535–540 (YRRRLH) the chain is on the mitochondrial intermembrane side.

In terms of assembly, self-associates and polymerizes (via CARD domains) to form 400 nM long three-stranded helical filaments on mitochondria, filament nucleation requires interaction with RIGI whose CARD domains act as a template for filament assembly. Interacts with RIGI, IFIH1/MDA5, TRAF2, TRAF6 and C1QBP. May interact with FADD, RIPK1, CHUK and IKBKB. Interacts (when phosphorylated) with IRF3; following activation and phosphorylation on the pLxIS motif by TBK1, recruits IRF3. Interacts with NLRX1. Interaction with NLRX1 requires the CARD domain. Interacts with PSMA7. Interacts with TRAFD1. Interacts (via C-terminus) with PCBP2 in a complex containing MAVS/IPS1, PCBP2 and ITCH. Interacts with CYLD. Interacts with SRC. Interacts with DHX58/LGP2 and IKBKE. Interacts with STING1. Interacts with IFIT3 (via N-terminus). Interacts with TBK1 only in the presence of IFIT3. Interacts with TTLL12; the interaction prevents MAVS binding to TBK1 and IKBKE. Interacts with MUL1. Interacts with ANKRD17. Interacts with NDFIP1. Interacts with SMURF1; the interaction is mediated by NDFIP1 and leads to MAVS ubiquitination and degradation. Interacts with UBXN1; this interaction inhibits MAVS-mediated antiviral pathway. Interacts (via C-terminus) with GPATCH3; the interaction is markedly increased upon viral infection. Directly interacts (via CARD domain) with ATG5 and ATG12, either as ATG5 and ATG12 monomers or as ATG12-ATG5 conjugates. Interacts with DHX33 (via the helicase C-terminal domain). Interacts with DDX3X (via C-terminus); this interaction occurs rapidly, but transiently after Sendai virus infection. The interaction with DDX3X potentiates MAVS-mediated IFNB induction. Conversely inhibition of this interaction, for instance by HCV core protein, prevents MAVS-mediated IFNB induction. Transiently interacts with TRAF3 early during Sendai virus infection. Interacts with CLPB; the interaction is enhanced by Sendai virus infection. Interacts with TRAF3IP3. Interacts with TOMM70; the interaction is enhanced by Sendai virus infection. Interacts with ZNFX1. Interacts with N4BP3; this interaction promotes the polyubiquitination of MAVS. Interacts with TAX1BP1; this interaction induces MAVS polyubiquitination. Interacts with NLRP3; promoting NLRP3 recruitment to mitochondria and activation of the NLRP3 inflammasome. Interacts with ECSIT; this interaction bridges RIGI to the MAVS complex at the mitochondrion. Interacts with UBL7; this interaction promotes MAVS 'Lys-27'-linked ubiquitination leading to type I interferon production. Interacts (via transmembrane domain) with SMIM30/MAVI1 (via transmembrane domain); the interaction disrupts MAVS interaction with RIGI and inhibits MAVS aggregation, resulting in the repression of type I interferon signaling and innate immune responses. As to quaternary structure, (Microbial infection) Interacts with hepatitis C virus (HCV) NS3/4A protease; this interaction leads to MAVS cleavage, thereby preventing the establishment of an antiviral state. (Microbial infection) Interacts with hepatitis GB virus B NS3/4A protease; this interaction leads to MAVS cleavage. In terms of assembly, (Microbial infection) Interacts with human respiratory syncytial virus/HRSV protein NS1; this interaction disrupts MAVS binding to RIGI. As to quaternary structure, (Microbial infection) Interacts with Andes virus Nnon-structural protein NS-S; this interaction may reduce MAVS ubiquitination and leads to inhibition of MAVS-induced type-I IFN signaling pathway. (Microbial infection) Interacts with Seneca Valley virus protease 3C; this interaction allows the cleavage of MAVS and subsequent suppression of host innate immunity. In terms of assembly, (Microbial infection) Interacts with SARS-CoV virus protein ORF9b; this interaction mediates MAVS proteasomal degradation. As to quaternary structure, (Microbial infection) Interacts with SARS-CoV-2 virus protein M; this interaction impairs MAVS self-association and its recruitment of downstream components. (Microbial infection) Interacts with foot-and-mouth disease virus protein VP1; this interaction competes with TRAF3 interaction to MAVS leading to suppression of host innate immunity. In terms of assembly, (Microbial infection) Interacts with Epstein-Barr virus protein BILF1; this interaction mediates MAVS routing from mitochondria to lysosomes. Following activation, phosphorylated by TBK1 at Ser-442 in the pLxIS motif. The phosphorylated pLxIS motif constitutes an IRF3-binding motif, leading to recruitment of the transcription factor IRF3 to induce type-I interferons and other cytokines. Post-translationally, ubiquitinated. Undergoes 'Lys-48'-linked polyubiquitination catalyzed by ITCH; ITCH-dependent polyubiquitination is mediated by the interaction with PCBP2 and leads to MAVS/IPS1 proteasomal degradation. Ubiquitinated by RNF125, leading to its degradation by the proteasome. Undergoes 'Lys-48'-linked ubiquitination catalyzed by SMURF1. Undergoes 'Lys-48'-linked ubiquitination catalyzed by MARCHF5 at Lys-7 and Lys-500, leading to proteasomal degradation. Ubiquitinated via 'Lys-63'-linked ubiquitination at Lys-10, Lys-311 and Lys-461 by UBE2N and TRIM31, promoting MAVS polymerization and formation of three-stranded helical filaments on mitochondria. Undergoes 'Lys-63'-linked ubiquitination leading to enhanced interaction between MAVS and TRAF2. Undergoes 'Lys-27'-linked ubiquitination by TRIM21 leading to enhanced interaction between MAVS and TBK1. Deubiquitinated by USP10 leading to attenuation of RIGI-mediated MAVS aggregation and production of type I interferon. Undergoes 'Lys-48'-linked polyubiquitination catalyzed by RNF115 leading to its degradation. In terms of processing, palmitoylated by ZHDDC4. Palmitoylation promotes MAVS stabilization and activation by inhibiting 'Lys-48'- but facilitating 'Lys-63'-linked ubiquitination. Proteolytically cleaved by apoptotic caspases during apoptosis, leading to its inactivation. Cleavage by CASP3 during virus-induced apoptosis inactivates it, preventing cytokine overproduction. Post-translationally, (Microbial infection) Cleaved and degraded by hepatitis A virus (HAV) protein 3ABC allowing the virus to disrupt the activation of host IRF3 through the MDA5 pathway. In terms of processing, (Microbial infection) Cleaved by the protease 2A of coxsackievirus B3, poliovirus and enterovirus 71 allowing the virus to disrupt the host type I interferon production. (Microbial infection) Cleaved by Seneca Valley virus protease 3C allowing the virus to suppress interferon type-I production. Post-translationally, (Microbial infection) Cleaved by HCV protease NS3/4A, thereby preventing the establishment of an antiviral state. In terms of processing, (Microbial infection) UFMylated by ULF1 in association with Epstein-Barr virus BILF1; leading to MAVS routing to the lysosome. In terms of tissue distribution, present in T-cells, monocytes, epithelial cells and hepatocytes (at protein level). Ubiquitously expressed, with highest levels in heart, skeletal muscle, liver, placenta and peripheral blood leukocytes.

Its subcellular location is the mitochondrion outer membrane. The protein localises to the mitochondrion. The protein resides in the peroxisome. Functionally, adapter required for innate immune defense against viruses. Acts downstream of DHX33, RIGI and IFIH1/MDA5, which detect intracellular dsRNA produced during viral replication, to coordinate pathways leading to the activation of NF-kappa-B, IRF3 and IRF7, and to the subsequent induction of antiviral cytokines such as IFNB and RANTES (CCL5). Peroxisomal and mitochondrial MAVS act sequentially to create an antiviral cellular state. Upon viral infection, peroxisomal MAVS induces the rapid interferon-independent expression of defense factors that provide short-term protection, whereas mitochondrial MAVS activates an interferon-dependent signaling pathway with delayed kinetics, which amplifies and stabilizes the antiviral response. May activate the same pathways following detection of extracellular dsRNA by TLR3. May protect cells from apoptosis. Involved in NLRP3 inflammasome activation by mediating NLRP3 recruitment to mitochondria. The sequence is that of Mitochondrial antiviral-signaling protein from Homo sapiens (Human).